The primary structure comprises 484 residues: Siroheme synthase 1 (484 aa).

Positions 1–205 (MHHYPIFLKL…GREAEGEAEL (205 aa)) are precorrin-2 dehydrogenase /sirohydrochlorin ferrochelatase. NAD(+) is bound by residues 22 to 23 (EA) and 43 to 44 (PV). S130 carries the post-translational modification Phosphoserine. The segment at 220–484 (GEVFLVGAGP…DPCWTGGMRD (265 aa)) is uroporphyrinogen-III C-methyltransferase. Position 229 (P229) interacts with S-adenosyl-L-methionine. Catalysis depends on D252, which acts as the Proton acceptor. The active-site Proton donor is K274. S-adenosyl-L-methionine is bound by residues 305-307 (GGD), L310, 335-336 (SA), M387, and A416.

This sequence in the N-terminal section; belongs to the precorrin-2 dehydrogenase / sirohydrochlorin ferrochelatase family. It in the C-terminal section; belongs to the precorrin methyltransferase family.

It catalyses the reaction uroporphyrinogen III + 2 S-adenosyl-L-methionine = precorrin-2 + 2 S-adenosyl-L-homocysteine + H(+). The catalysed reaction is precorrin-2 + NAD(+) = sirohydrochlorin + NADH + 2 H(+). It carries out the reaction siroheme + 2 H(+) = sirohydrochlorin + Fe(2+). Its pathway is cofactor biosynthesis; adenosylcobalamin biosynthesis; precorrin-2 from uroporphyrinogen III: step 1/1. It participates in cofactor biosynthesis; adenosylcobalamin biosynthesis; sirohydrochlorin from precorrin-2: step 1/1. It functions in the pathway porphyrin-containing compound metabolism; siroheme biosynthesis; precorrin-2 from uroporphyrinogen III: step 1/1. The protein operates within porphyrin-containing compound metabolism; siroheme biosynthesis; siroheme from sirohydrochlorin: step 1/1. Its pathway is porphyrin-containing compound metabolism; siroheme biosynthesis; sirohydrochlorin from precorrin-2: step 1/1. In terms of biological role, multifunctional enzyme that catalyzes the SAM-dependent methylations of uroporphyrinogen III at position C-2 and C-7 to form precorrin-2 via precorrin-1. Then it catalyzes the NAD-dependent ring dehydrogenation of precorrin-2 to yield sirohydrochlorin. Finally, it catalyzes the ferrochelation of sirohydrochlorin to yield siroheme. This chain is Siroheme synthase 1, found in Halorhodospira halophila (strain DSM 244 / SL1) (Ectothiorhodospira halophila (strain DSM 244 / SL1)).